A 689-amino-acid polypeptide reads, in one-letter code: Glycine--tRNA ligase beta subunit (689 aa).

Belongs to the class-II aminoacyl-tRNA synthetase family. As to quaternary structure, tetramer of two alpha and two beta subunits.

Its subcellular location is the cytoplasm. The enzyme catalyses tRNA(Gly) + glycine + ATP = glycyl-tRNA(Gly) + AMP + diphosphate. The polypeptide is Glycine--tRNA ligase beta subunit (Shewanella pealeana (strain ATCC 700345 / ANG-SQ1)).